We begin with the raw amino-acid sequence, 159 residues long: Large ribosomal subunit protein uL10 (159 aa).

This sequence belongs to the universal ribosomal protein uL10 family. Part of the ribosomal stalk of the 50S ribosomal subunit. The N-terminus interacts with L11 and the large rRNA to form the base of the stalk. The C-terminus forms an elongated spine to which L12 dimers bind in a sequential fashion forming a multimeric L10(L12)X complex.

Forms part of the ribosomal stalk, playing a central role in the interaction of the ribosome with GTP-bound translation factors. The protein is Large ribosomal subunit protein uL10 of Campylobacter jejuni subsp. jejuni serotype O:6 (strain 81116 / NCTC 11828).